We begin with the raw amino-acid sequence, 172 residues long: Adenine phosphoribosyltransferase (172 aa).

Belongs to the purine/pyrimidine phosphoribosyltransferase family. In terms of assembly, homodimer.

It is found in the cytoplasm. The enzyme catalyses AMP + diphosphate = 5-phospho-alpha-D-ribose 1-diphosphate + adenine. Its pathway is purine metabolism; AMP biosynthesis via salvage pathway; AMP from adenine: step 1/1. Functionally, catalyzes a salvage reaction resulting in the formation of AMP, that is energically less costly than de novo synthesis. The sequence is that of Adenine phosphoribosyltransferase from Polynucleobacter asymbioticus (strain DSM 18221 / CIP 109841 / QLW-P1DMWA-1) (Polynucleobacter necessarius subsp. asymbioticus).